Reading from the N-terminus, the 273-residue chain is ABC transporter glutamine-binding protein GlnH (273 aa).

An N-terminal signal peptide occupies residues 1-20 (MKKIFSLALISLFAVILLAA). Cys21 carries N-palmitoyl cysteine lipidation. Residue Cys21 is the site of S-diacylglycerol cysteine attachment.

This sequence belongs to the bacterial solute-binding protein 3 family. The complex is composed of two ATP-binding proteins (GlnQ), two transmembrane proteins (GlnM and GlnP) and a solute-binding protein (GlnH).

The protein localises to the cell membrane. Part of the ABC transporter complex GlnHMPQ involved in glutamine transport. The polypeptide is ABC transporter glutamine-binding protein GlnH (glnH) (Bacillus subtilis (strain 168)).